Reading from the N-terminus, the 464-residue chain is Citrate synthase 5, mitochondrial (464 aa).

The N-terminal 25 residues, 1–25 (MVFFRSVSAISRLRSRAVQQSSLSN), are a transit peptide targeting the mitochondrion. Active-site residues include H300, H346, and D401.

Belongs to the citrate synthase family.

The protein localises to the mitochondrion matrix. It carries out the reaction oxaloacetate + acetyl-CoA + H2O = citrate + CoA + H(+). It participates in carbohydrate metabolism; tricarboxylic acid cycle; isocitrate from oxaloacetate: step 1/2. The sequence is that of Citrate synthase 5, mitochondrial (CSY5) from Arabidopsis thaliana (Mouse-ear cress).